The following is a 473-amino-acid chain: UDP-glycosyltransferase 91D2 (473 aa).

His26 acts as the Proton acceptor in catalysis. His26 lines the an anthocyanidin pocket. Residue Asp121 is the Charge relay of the active site. Residues Ala344, Gln346, His361, Ser366, and Glu369 each coordinate UDP-alpha-D-glucose. Gly384 serves as a coordination point for an anthocyanidin. Asp385 and Gln386 together coordinate UDP-alpha-D-glucose.

It belongs to the UDP-glycosyltransferase family.

It carries out the reaction steviolmonoside + UDP-alpha-D-glucose = steviolbioside + UDP + H(+). The catalysed reaction is rubusoside + UDP-alpha-D-glucose = stevioside + UDP + H(+). It catalyses the reaction stevioside + UDP-alpha-D-glucose = rebaudioside E + UDP + H(+). The enzyme catalyses rebaudioside A + UDP-alpha-D-glucose = rebaudioside D + UDP + H(+). Involved in the biosynthesis of steviol glycosides in leaves. Converts the mono-glycoside steviolmonoside to the bi-glycoside steviolbioside. Converts the bi-glycoside rubusoside to the tri-glycoside stevioside. Converts the tri-glycoside stevioside to the tetra-glycoside rebaudioside E. Converts the tetra-glycoside rebaudioside A to the penta-glycoside rebaudioside E. The protein is UDP-glycosyltransferase 91D2 of Stevia rebaudiana (Stevia).